A 470-amino-acid polypeptide reads, in one-letter code: Nuclear receptor subfamily 0 group B member 1 (470 aa).

Repeat copies occupy residues 1 to 67 (MAGE…YRCC), 68 to 133 (FCGK…YRCC), and 134 to 200 (FCGE…YRCC). A 4 X 67 AA tandem repeats region spans residues 1-253 (MAGENHQWQG…RPVALKSPQV (253 aa)). 3 short sequence motifs (LXXLL motif) span residues 13-17 (LYNML), 80-84 (LYSML), and 146-150 (LYSLL). The 4; truncated repeat unit spans residues 201-253 (FCGEDHPQQGSTLYCMPTSTNQAQAAPEERPRAPWWDTSSGALRPVALKSPQV). Residues 205–469 (DHPQQGSTLY…DMMLEMLCTK (265 aa)) form the NR LBD domain. The short motif at 461-466 (MMLEML) is the AF-2 motif element.

Belongs to the nuclear hormone receptor family. NR0 subfamily. As to quaternary structure, homodimer. Interacts with NR5A1, NR5A2, NR0B2 and with COPS2. Interacts with ESRRB; represses ESRRB activity at the GATA6 promoter.

Its subcellular location is the nucleus. The protein localises to the cytoplasm. Its function is as follows. Nuclear receptor that lacks a DNA-binding domain and acts as a corepressor that inhibits the transcriptional activity of other nuclear receptors through heterodimeric interactions. Component of a cascade required for the development of the hypothalamic-pituitary-adrenal-gonadal axis. May also have a role in the development of the embryo and in the maintenance of embryonic stem cell pluripotency. The chain is Nuclear receptor subfamily 0 group B member 1 (NR0B1) from Pan troglodytes (Chimpanzee).